The sequence spans 598 residues: MRALLTFFVAGLLVLSSPAMALFGNNQNSSFASGSNDFVPVDQAFPFNYFQQDHRITLDWQVKEGYYLYQQRLSFSAENVVLGDIQMENGQPYRDEFFGDVNIYTNPLFVNIPMQDWQPGAKLIVQYQGCAKAGFCYPPETRVIDIASFTNGDMAPATMPTQTASPLDTSTANTSTPQPLTQQDQLASGLADNWWTPLLFLALGVGLAFTPCVLPMYPILTSIVLGSGKLSQRRALGLSLVYVQGMALTYTLLGLVVASAGLQFQAAMQHPYVLIGLSILFVTLALSMFGVYTLQLPSSVQTWLNNLSNKQQGGSSTGVFAMGAISGLVCSPCTTAPLSGALLYVAQSGDLLTGGVALYALAMGMGIPLILVAVFGNKLLPKAGGWMDHVKTLFGFVLLAAPIFLLERILPEMWSTALWSALGIAAFGWLYHVKNSLEFGGWKQSAVGIIAVLGLFASAQPALNYWFADSSQQAQTSEVSFIKIRNVEELQQQLALAKQAKKPVMLDFYADWCVACKEFEKYTFHDPAVAAQLKQFVLLQADVTRNQAQDIELLQAQQVLGLPTIDFWDAQGNPVSNARLTGFMQAAPFLEHIQRISN.

A signal peptide spans 1–21 (MRALLTFFVAGLLVLSSPAMA). Residues C130 and C136 are joined by a disulfide bond. Residues 158-180 (TMPTQTASPLDTSTANTSTPQPL) are disordered. Residues 159 to 180 (MPTQTASPLDTSTANTSTPQPL) show a composition bias toward polar residues. 8 helical membrane passes run 198–220 (LLFL…YPIL), 240–262 (LVYV…SAGL), 274–296 (LIGL…TLQL), 324–346 (AISG…LYVA), 353–375 (TGGV…VAVF), 385–407 (GWMD…FLLE), 414–431 (WSTA…GWLY), and 446–468 (AVGI…YWFA). C212 and C333 are disulfide-bonded. One can recognise a Thioredoxin domain in the interval 456–598 (FASAQPALNY…FLEHIQRISN (143 aa)). C513 and C516 form a disulfide bridge.

The protein belongs to the thioredoxin family. DsbD subfamily.

It is found in the cell inner membrane. It catalyses the reaction [protein]-dithiol + NAD(+) = [protein]-disulfide + NADH + H(+). The catalysed reaction is [protein]-dithiol + NADP(+) = [protein]-disulfide + NADPH + H(+). In terms of biological role, required to facilitate the formation of correct disulfide bonds in some periplasmic proteins and for the assembly of the periplasmic c-type cytochromes. Acts by transferring electrons from cytoplasmic thioredoxin to the periplasm. This transfer involves a cascade of disulfide bond formation and reduction steps. This Vibrio vulnificus (strain YJ016) protein is Thiol:disulfide interchange protein DsbD.